The chain runs to 120 residues: Large ribosomal subunit protein uL18 (120 aa).

Belongs to the universal ribosomal protein uL18 family. Part of the 50S ribosomal subunit; part of the 5S rRNA/L5/L18/L25 subcomplex. Contacts the 5S and 23S rRNAs.

In terms of biological role, this is one of the proteins that bind and probably mediate the attachment of the 5S RNA into the large ribosomal subunit, where it forms part of the central protuberance. The sequence is that of Large ribosomal subunit protein uL18 from Brucella anthropi (strain ATCC 49188 / DSM 6882 / CCUG 24695 / JCM 21032 / LMG 3331 / NBRC 15819 / NCTC 12168 / Alc 37) (Ochrobactrum anthropi).